A 221-amino-acid polypeptide reads, in one-letter code: Elongation factor Ts (221 aa).

Residues 82-85 (TDFV) are involved in Mg(2+) ion dislocation from EF-Tu.

This sequence belongs to the EF-Ts family.

The protein resides in the cytoplasm. Associates with the EF-Tu.GDP complex and induces the exchange of GDP to GTP. It remains bound to the aminoacyl-tRNA.EF-Tu.GTP complex up to the GTP hydrolysis stage on the ribosome. The protein is Elongation factor Ts of Synechococcus elongatus (strain ATCC 33912 / PCC 7942 / FACHB-805) (Anacystis nidulans R2).